A 290-amino-acid polypeptide reads, in one-letter code: Elongation factor Ts (290 aa).

Residues 79-82 (TDFV) are involved in Mg(2+) ion dislocation from EF-Tu.

Belongs to the EF-Ts family.

Its subcellular location is the cytoplasm. Its function is as follows. Associates with the EF-Tu.GDP complex and induces the exchange of GDP to GTP. It remains bound to the aminoacyl-tRNA.EF-Tu.GTP complex up to the GTP hydrolysis stage on the ribosome. The sequence is that of Elongation factor Ts from Pseudoalteromonas atlantica (strain T6c / ATCC BAA-1087).